A 330-amino-acid chain; its full sequence is tRNA U34 carboxymethyltransferase (330 aa).

Carboxy-S-adenosyl-L-methionine-binding positions include Lys-98, Trp-112, Lys-117, Gly-137, 187–188, Met-203, Tyr-207, and Arg-322; that span reads ME. The tract at residues 309–330 is disordered; that stretch reads NPSKTIEGYPGPKRATLIAEKP.

It belongs to the class I-like SAM-binding methyltransferase superfamily. CmoB family. Homotetramer.

The catalysed reaction is carboxy-S-adenosyl-L-methionine + 5-hydroxyuridine(34) in tRNA = 5-carboxymethoxyuridine(34) in tRNA + S-adenosyl-L-homocysteine + H(+). Its function is as follows. Catalyzes carboxymethyl transfer from carboxy-S-adenosyl-L-methionine (Cx-SAM) to 5-hydroxyuridine (ho5U) to form 5-carboxymethoxyuridine (cmo5U) at position 34 in tRNAs. This Marinobacter nauticus (strain ATCC 700491 / DSM 11845 / VT8) (Marinobacter aquaeolei) protein is tRNA U34 carboxymethyltransferase.